Reading from the N-terminus, the 815-residue chain is Serotype-specific mannosyltransferase WbdA (815 aa).

Positions 1 to 374 are alpha-(1-&gt;2)-mannosyltransferase; the sequence is MSRAIIENAG…WANTAHLAID (374 aa). An alpha-(1-&gt;3)-mannosyltransferase region spans residues 431–804; the sequence is KLLVDISVLA…WKQSAELLLK (374 aa).

This sequence belongs to the glycosyltransferase group 1 family. Glycosyltransferase 4 subfamily.

It is found in the cell inner membrane. It participates in bacterial outer membrane biogenesis; LPS O-antigen biosynthesis. Functionally, mannosyltransferase involved in the biosynthesis of the repeat unit of the lipopolysaccharide (LPS) O-antigen region. The protein is Serotype-specific mannosyltransferase WbdA of Escherichia coli.